We begin with the raw amino-acid sequence, 1243 residues long: ATP-dependent helicase/nuclease subunit A (1243 aa).

The UvrD-like helicase ATP-binding domain occupies 2 to 475 (VNWTKEQEEA…IDLARNFRSR (474 aa)). 23–30 (AAAGSGKT) provides a ligand contact to ATP. The region spanning 502–803 (AAELIYGNKM…RIMTIHKSKG (302 aa)) is the UvrD-like helicase C-terminal domain.

It belongs to the helicase family. AddA subfamily. As to quaternary structure, heterodimer of AddA and AddB/RexB. The cofactor is Mg(2+).

It carries out the reaction Couples ATP hydrolysis with the unwinding of duplex DNA by translocating in the 3'-5' direction.. It catalyses the reaction ATP + H2O = ADP + phosphate + H(+). Functionally, the heterodimer acts as both an ATP-dependent DNA helicase and an ATP-dependent, dual-direction single-stranded exonuclease. Recognizes the chi site generating a DNA molecule suitable for the initiation of homologous recombination. The AddA nuclease domain is required for chi fragment generation; this subunit has the helicase and 3' -&gt; 5' nuclease activities. This is ATP-dependent helicase/nuclease subunit A from Oceanobacillus iheyensis (strain DSM 14371 / CIP 107618 / JCM 11309 / KCTC 3954 / HTE831).